A 573-amino-acid polypeptide reads, in one-letter code: Glucocorticoid modulatory element-binding protein 1 (573 aa).

Ala2 is subject to N-acetylalanine. The region spanning 82 to 166 is the SAND domain; sequence TGTIEANEDM…RKMMDSGQID (85 aa). Cys113 contacts Zn(2+). Residues Lys139, Lys143, Lys146, and Arg157 each coordinate DNA. His170, Cys174, and Cys178 together coordinate Zn(2+). Positions 321-367 form a coiled coil; that stretch reads LDNRRNQVEQGEEQFLYTLTDLERQLEEQKKQGQDHRLKSQTVQNVV. A disordered region spans residues 370–398; the sequence is PVSTPKPPKRPRLQRPASTTVLSPSPPVQ.

As to quaternary structure, homodimer, and heterodimer of GMEB1 and GMEB2. GMEB1 and GMEB2 form the parvovirus initiator complex (PIF). Interacts with the glucocorticoid receptor (NR3C1) and NCOA2/TIF2. May interact with HSP27 and CREB-binding protein (CBP).

It is found in the nucleus. Its subcellular location is the cytoplasm. Trans-acting factor that binds to glucocorticoid modulatory elements (GME) present in the TAT (tyrosine aminotransferase) promoter and increases sensitivity to low concentrations of glucocorticoids. Also binds to the transferrin receptor promoter. Essential auxiliary factor for the replication of parvoviruses. This chain is Glucocorticoid modulatory element-binding protein 1 (GMEB1), found in Homo sapiens (Human).